The primary structure comprises 212 residues: Protein FAM177A1 (212 aa).

Methionine 1 is subject to N-acetylmethionine. Basic and acidic residues predominate over residues 1–11; that stretch reads MEGEPASREEG. The disordered stretch occupies residues 1–33; sequence MEGEPASREEGEAVNASGAAAASAFRESAQQMS. Residues 13 to 29 show a composition bias toward low complexity; sequence AVNASGAAAASAFRESA. Serine 69 carries the post-translational modification Phosphoserine. Threonine 70 carries the phosphothreonine modification. Residues 135–172 adopt a coiled-coil conformation; sequence IDEYYRMKKEEEEEEEENRMSEEAERQYQQNKLQADSV. Positions 146–179 are disordered; it reads EEEEEENRMSEEAERQYQQNKLQADSVVQSDQPE. The span at 161–179 shows a compositional bias: polar residues; that stretch reads QYQQNKLQADSVVQSDQPE.

It belongs to the FAM177 family.

In Bos taurus (Bovine), this protein is Protein FAM177A1 (FAM177A1).